The primary structure comprises 476 residues: Bifunctional protein HldE (476 aa).

Residues 1–319 (MKPTLPNYDQ…EAIHGSQDSG (319 aa)) are ribokinase. 195–198 (NMLE) lines the ATP pocket. Aspartate 264 is a catalytic residue. Residues 344–476 (MTNGCFDILH…IIEAIKGGRG (133 aa)) are cytidylyltransferase.

The protein in the N-terminal section; belongs to the carbohydrate kinase PfkB family. This sequence in the C-terminal section; belongs to the cytidylyltransferase family. As to quaternary structure, homodimer.

It catalyses the reaction D-glycero-beta-D-manno-heptose 7-phosphate + ATP = D-glycero-beta-D-manno-heptose 1,7-bisphosphate + ADP + H(+). It carries out the reaction D-glycero-beta-D-manno-heptose 1-phosphate + ATP + H(+) = ADP-D-glycero-beta-D-manno-heptose + diphosphate. It participates in nucleotide-sugar biosynthesis; ADP-L-glycero-beta-D-manno-heptose biosynthesis; ADP-L-glycero-beta-D-manno-heptose from D-glycero-beta-D-manno-heptose 7-phosphate: step 1/4. The protein operates within nucleotide-sugar biosynthesis; ADP-L-glycero-beta-D-manno-heptose biosynthesis; ADP-L-glycero-beta-D-manno-heptose from D-glycero-beta-D-manno-heptose 7-phosphate: step 3/4. Catalyzes the phosphorylation of D-glycero-D-manno-heptose 7-phosphate at the C-1 position to selectively form D-glycero-beta-D-manno-heptose-1,7-bisphosphate. Its function is as follows. Catalyzes the ADP transfer from ATP to D-glycero-beta-D-manno-heptose 1-phosphate, yielding ADP-D-glycero-beta-D-manno-heptose. The sequence is that of Bifunctional protein HldE from Aliivibrio fischeri (strain ATCC 700601 / ES114) (Vibrio fischeri).